The sequence spans 130 residues: HTH-type transcriptional regulator KmtR (130 aa).

The region spanning 10–104 (LPDDQVCLVV…DAVFNAEHAG (95 aa)) is the HTH arsR-type domain. The segment at residues 44-67 (VNELAEQVGKPAPSVSQHLAKLRM) is a DNA-binding region (H-T-H motif). Positions 110-130 (HHRAAGGLQSVAKASATKDVG) are disordered.

Its activity is regulated as follows. Binding to DNA is inhibited by nickel and cobalt ions. Functionally, represses expression of Rv2025c and its own expression. Acts by binding to the promoter regions. The protein is HTH-type transcriptional regulator KmtR (kmtR) of Mycobacterium tuberculosis (strain ATCC 25618 / H37Rv).